Here is a 746-residue protein sequence, read N- to C-terminus: Exocyst complex component 3-like protein (746 aa).

Residues 1 to 23 (MDSAAKDEMQPALSPGPEWPEQE) form a disordered region. Positions 1–370 (MDSAAKDEMQ…DVSQLEPLLT (370 aa)) are mediates interaction with EXOC2, EXOC4 and EXOC5.

It belongs to the SEC6 family. In terms of assembly, interacts with EXOC2, EXOC4 and EXOC5; may be part of the exocyst.

It localises to the cytoplasmic vesicle. Its subcellular location is the secretory vesicle. As part of the exocyst, may play a role in regulated exocytosis of insulin granules. This is Exocyst complex component 3-like protein (EXOC3L1) from Homo sapiens (Human).